Here is a 460-residue protein sequence, read N- to C-terminus: Probable asparagine--tRNA ligase, mitochondrial (460 aa).

The protein belongs to the class-II aminoacyl-tRNA synthetase family.

Its subcellular location is the mitochondrion matrix. It carries out the reaction tRNA(Asn) + L-asparagine + ATP = L-asparaginyl-tRNA(Asn) + AMP + diphosphate + H(+). The sequence is that of Probable asparagine--tRNA ligase, mitochondrial (asnS2) from Dictyostelium discoideum (Social amoeba).